We begin with the raw amino-acid sequence, 865 residues long: Protein translocase subunit SecA (865 aa).

ATP-binding positions include Gln85, 103-107 (GEGKT), and Asp505. Cys847, Cys849, Cys858, and His859 together coordinate Zn(2+).

This sequence belongs to the SecA family. Monomer and homodimer. Part of the essential Sec protein translocation apparatus which comprises SecA, SecYEG and auxiliary proteins SecDF. Other proteins may also be involved. Zn(2+) serves as cofactor.

The protein resides in the cell membrane. It localises to the cytoplasm. The enzyme catalyses ATP + H2O + cellular proteinSide 1 = ADP + phosphate + cellular proteinSide 2.. Part of the Sec protein translocase complex. Interacts with the SecYEG preprotein conducting channel. Has a central role in coupling the hydrolysis of ATP to the transfer of proteins into and across the cell membrane, serving as an ATP-driven molecular motor driving the stepwise translocation of polypeptide chains across the membrane. The polypeptide is Protein translocase subunit SecA (Lactococcus lactis subsp. lactis (strain IL1403) (Streptococcus lactis)).